Consider the following 132-residue polypeptide: uncharacterized protein (132 aa).

3 consecutive transmembrane segments (helical) span residues 28–48, 59–79, and 106–126; these read LLRLISLCIPIIRPFSFLIYP, ILPSILPIIPFAISSSLLFSY, and LLVASFVYLPYRSPLPVVIEI.

Its subcellular location is the membrane. This is an uncharacterized protein from Schizosaccharomyces pombe (strain 972 / ATCC 24843) (Fission yeast).